Consider the following 451-residue polypeptide: Phenylalanine--tRNA ligase, mitochondrial (451 aa).

Residues 157–160, Arg-179, 186–188, and 193–195 each bind substrate; these read SAHQ, QHY, and QLE. At Lys-202 the chain carries N6-acetyllysine. The substrate site is built by Glu-287 and Phe-312. An FDX-ACB domain is found at 358 to 450; the sequence is SKYPAVINDI…AVQLLGVEGR (93 aa).

Belongs to the class-II aminoacyl-tRNA synthetase family. As to quaternary structure, monomer.

It localises to the mitochondrion matrix. The protein resides in the mitochondrion. It catalyses the reaction tRNA(Phe) + L-phenylalanine + ATP = L-phenylalanyl-tRNA(Phe) + AMP + diphosphate + H(+). Is responsible for the charging of tRNA(Phe) with phenylalanine in mitochondrial translation. To a lesser extent, also catalyzes direct attachment of m-Tyr (an oxidized version of Phe) to tRNA(Phe), thereby opening the way for delivery of the misacylated tRNA to the ribosome and incorporation of ROS-damaged amino acid into proteins. This is Phenylalanine--tRNA ligase, mitochondrial (FARS2) from Homo sapiens (Human).